A 497-amino-acid polypeptide reads, in one-letter code: Serine hydroxymethyltransferase (497 aa).

Residues Leu176 and 180 to 182 (GHL) contribute to the (6S)-5,6,7,8-tetrahydrofolate site. Lys289 carries the N6-(pyridoxal phosphate)lysine modification. Glu306 lines the (6S)-5,6,7,8-tetrahydrofolate pocket.

The protein belongs to the SHMT family. In terms of assembly, homodimer. The cofactor is pyridoxal 5'-phosphate.

The protein resides in the cytoplasm. The enzyme catalyses (6R)-5,10-methylene-5,6,7,8-tetrahydrofolate + glycine + H2O = (6S)-5,6,7,8-tetrahydrofolate + L-serine. Its pathway is one-carbon metabolism; tetrahydrofolate interconversion. It functions in the pathway amino-acid biosynthesis; glycine biosynthesis; glycine from L-serine: step 1/1. Functionally, catalyzes the reversible interconversion of serine and glycine with tetrahydrofolate (THF) serving as the one-carbon carrier. This reaction serves as the major source of one-carbon groups required for the biosynthesis of purines, thymidylate, methionine, and other important biomolecules. Also exhibits THF-independent aldolase activity toward beta-hydroxyamino acids, producing glycine and aldehydes, via a retro-aldol mechanism. This chain is Serine hydroxymethyltransferase, found in Chlamydia pneumoniae (Chlamydophila pneumoniae).